The chain runs to 119 residues: Small ribosomal subunit protein uS10 (119 aa).

Alanine 2 carries the post-translational modification N-acetylalanine. Residue lysine 4 forms a Glycyl lysine isopeptide (Lys-Gly) (interchain with G-Cter in ubiquitin) linkage. Lysine 8 is subject to N6-succinyllysine; alternate. Lysine 8 is covalently cross-linked (Glycyl lysine isopeptide (Lys-Gly) (interchain with G-Cter in ubiquitin); alternate). Threonine 9 carries the post-translational modification Phosphothreonine. Residues lysine 34 and lysine 75 each carry the N6-acetyllysine modification. Serine 93 is modified (phosphoserine).

The protein belongs to the universal ribosomal protein uS10 family. As to quaternary structure, component of the 40S small ribosomal subunit. In terms of processing, polyubiquitinated by ZNF598 via 'Lys-63'-linked ubiquitin chains when a ribosome has stalled, initiating the ribosome quality control (RQC) pathway to degrade the potentially detrimental aberrant nascent polypeptide. Deubiquitinated by OTUD3 and USP21, antagonizing ZNF598 activity. Ufmylated by UFL1.

Its subcellular location is the cytoplasm. Its function is as follows. Component of the small ribosomal subunit. The ribosome is a large ribonucleoprotein complex responsible for the synthesis of proteins in the cell. This chain is Small ribosomal subunit protein uS10 (RPS20), found in Sus scrofa (Pig).